Here is a 420-residue protein sequence, read N- to C-terminus: Phospholipase A1-II 3 (420 aa).

The N-terminal stretch at 1–21 (MCCFLLVSVLLATTLTDVASA) is a signal peptide. The N-linked (GlcNAc...) asparagine glycan is linked to Asn-231. The active-site Acyl-ester intermediate is Ser-240. The active-site Charge relay system is Ser-240. Residue Asn-294 is glycosylated (N-linked (GlcNAc...) asparagine). Residues Asp-305 and His-343 each act as charge relay system in the active site. Residues 367–388 (VVDRDLALVNKEVDALRDEYQV) are a coiled coil. Asn-403 carries N-linked (GlcNAc...) asparagine glycosylation.

The protein belongs to the AB hydrolase superfamily. Lipase family.

Its subcellular location is the secreted. Its function is as follows. Acylhydrolase that catalyzes the hydrolysis of phospholipids at the sn-1 position. The sequence is that of Phospholipase A1-II 3 from Oryza sativa subsp. japonica (Rice).